Here is a 397-residue protein sequence, read N- to C-terminus: ATP-dependent RNA helicase eIF4A (397 aa).

A Q motif motif is present at residues 23-51; it reads YKFDDLNLKPNIVRGIFGYGYETPSAIQQ. One can recognise a Helicase ATP-binding domain in the interval 54–224; it reads ILPITEGRDV…TKFMNNPVRI (171 aa). 67–74 lines the ATP pocket; sequence AQSGTGKT. A DEAD box motif is present at residues 172–175; it reads DEAD. The 162-residue stretch at 235–396 folds into the Helicase C-terminal domain; that stretch reads GIKQFYINVE…EMPADIGALF (162 aa).

It belongs to the DEAD box helicase family. eIF4A subfamily. As to quaternary structure, component of the eIF4F complex, which composition varies with external and internal environmental conditions. It is composed of at least eIF4A, eIF4E and eIF4G.

It localises to the cytoplasm. It catalyses the reaction ATP + H2O = ADP + phosphate + H(+). Its function is as follows. ATP-dependent RNA helicase which is a subunit of the eIF4F complex involved in cap recognition and is required for mRNA binding to ribosome. In the current model of translation initiation, eIF4A unwinds RNA secondary structures in the 5'-UTR of mRNAs which is necessary to allow efficient binding of the small ribosomal subunit, and subsequent scanning for the initiator codon. This is ATP-dependent RNA helicase eIF4A (TIF1) from Scheffersomyces stipitis (strain ATCC 58785 / CBS 6054 / NBRC 10063 / NRRL Y-11545) (Yeast).